A 48-amino-acid polypeptide reads, in one-letter code: uncharacterized protein (48 aa).

This is an uncharacterized protein from Acidianus filamentous virus 2 (isolate Italy/Pozzuoli) (AFV-2).